The primary structure comprises 176 residues: Dual-action ribosomal maturation protein DarP (176 aa).

It belongs to the DarP family.

The protein resides in the cytoplasm. Functionally, member of a network of 50S ribosomal subunit biogenesis factors which assembles along the 30S-50S interface, preventing incorrect 23S rRNA structures from forming. Promotes peptidyl transferase center (PTC) maturation. The sequence is that of Dual-action ribosomal maturation protein DarP from Aliivibrio fischeri (strain MJ11) (Vibrio fischeri).